Here is a 354-residue protein sequence, read N- to C-terminus: Methionine import ATP-binding protein MetN (354 aa).

Residues 8–250 (LDHIDITFHQ…PKEALTQEFI (243 aa)) enclose the ABC transporter domain. 42–49 (GYSGAGKS) provides a ligand contact to ATP.

The protein belongs to the ABC transporter superfamily. Methionine importer (TC 3.A.1.24) family. In terms of assembly, the complex is composed of two ATP-binding proteins (MetN), two transmembrane proteins (MetI) and a solute-binding protein (MetQ).

The protein resides in the cell membrane. It carries out the reaction L-methionine(out) + ATP + H2O = L-methionine(in) + ADP + phosphate + H(+). The enzyme catalyses D-methionine(out) + ATP + H2O = D-methionine(in) + ADP + phosphate + H(+). Part of the ABC transporter complex MetNIQ involved in methionine import. Responsible for energy coupling to the transport system. The protein is Methionine import ATP-binding protein MetN of Streptococcus pyogenes serotype M4 (strain MGAS10750).